Here is a 442-residue protein sequence, read N- to C-terminus: D-serine dehydratase (442 aa).

K118 is modified (N6-(pyridoxal phosphate)lysine).

It belongs to the serine/threonine dehydratase family. DsdA subfamily. As to quaternary structure, monomer. The cofactor is pyridoxal 5'-phosphate.

It catalyses the reaction D-serine = pyruvate + NH4(+). This chain is D-serine dehydratase, found in Escherichia coli (strain K12 / MC4100 / BW2952).